Here is a 220-residue protein sequence, read N- to C-terminus: Small ribosomal subunit protein uS3 (220 aa).

The KH type-2 domain maps to 39–107 (IREHVEGRLK…RVHINISEIK (69 aa)).

It belongs to the universal ribosomal protein uS3 family. In terms of assembly, part of the 30S ribosomal subunit. Forms a tight complex with proteins S10 and S14.

Its function is as follows. Binds the lower part of the 30S subunit head. Binds mRNA in the 70S ribosome, positioning it for translation. This is Small ribosomal subunit protein uS3 from Shouchella clausii (strain KSM-K16) (Alkalihalobacillus clausii).